A 516-amino-acid chain; its full sequence is UvrABC system protein C (516 aa).

Residues H9–I87 form the GIY-YIG domain. The UVR domain occupies G191 to L226.

This sequence belongs to the UvrC family. Interacts with UvrB in an incision complex.

It localises to the cytoplasm. In terms of biological role, the UvrABC repair system catalyzes the recognition and processing of DNA lesions. UvrC both incises the 5' and 3' sides of the lesion. The N-terminal half is responsible for the 3' incision and the C-terminal half is responsible for the 5' incision. This Methanosarcina acetivorans (strain ATCC 35395 / DSM 2834 / JCM 12185 / C2A) protein is UvrABC system protein C.